The primary structure comprises 458 residues: RuvB-like protein 1 (458 aa).

73 to 80 is an ATP binding site; it reads GPPGTGKT.

Belongs to the RuvB family. As to quaternary structure, interacts with FRI, and with FLX and FES1, two component of the transcription activator complex FRI-C. Interacts with the disease resistance genes RPM1 and RPP5.

It localises to the nucleus. The enzyme catalyses ATP + H2O = ADP + phosphate + H(+). Functionally, proposed core component of the chromatin remodeling INO80 complex which is involved in transcriptional regulation, DNA replication and probably DNA repair. Component of the NuA4 histone acetyltransferase complex which is involved in transcriptional activation of select genes principally by acetylation of nucleosomal histones H4 and H2A. Has single-stranded DNA-stimulated ATPase and ATP-dependent DNA helicase (3' to 5') activity suggesting a role in nuclear processes such as recombination and transcription. The chain is RuvB-like protein 1 (RIN1) from Arabidopsis thaliana (Mouse-ear cress).